A 699-amino-acid polypeptide reads, in one-letter code: Elongation factor G (699 aa).

One can recognise a tr-type G domain in the interval E8 to M288. GTP contacts are provided by residues A17–T24, D86–H90, and N140–D143.

It belongs to the TRAFAC class translation factor GTPase superfamily. Classic translation factor GTPase family. EF-G/EF-2 subfamily.

Its subcellular location is the cytoplasm. Catalyzes the GTP-dependent ribosomal translocation step during translation elongation. During this step, the ribosome changes from the pre-translocational (PRE) to the post-translocational (POST) state as the newly formed A-site-bound peptidyl-tRNA and P-site-bound deacylated tRNA move to the P and E sites, respectively. Catalyzes the coordinated movement of the two tRNA molecules, the mRNA and conformational changes in the ribosome. The polypeptide is Elongation factor G (Rhizobium johnstonii (strain DSM 114642 / LMG 32736 / 3841) (Rhizobium leguminosarum bv. viciae)).